A 470-amino-acid polypeptide reads, in one-letter code: Aminodeoxychorismate synthase component 1 (470 aa).

It belongs to the anthranilate synthase component I family. In terms of assembly, monomer. Heterodimer consisting of two non-identical subunits: a glutamine amidotransferase subunit (PabA) and a aminodeoxychorismate synthase subunit (PabB). Mg(2+) serves as cofactor.

The catalysed reaction is chorismate + L-glutamine = 4-amino-4-deoxychorismate + L-glutamate. It functions in the pathway cofactor biosynthesis; tetrahydrofolate biosynthesis; 4-aminobenzoate from chorismate: step 1/2. Its function is as follows. Part of a heterodimeric complex that catalyzes the two-step biosynthesis of 4-amino-4-deoxychorismate (ADC), a precursor of p-aminobenzoate (PABA) and tetrahydrofolate. In the first step, a glutamine amidotransferase (PabA) generates ammonia as a substrate that, along with chorismate, is used in the second step, catalyzed by aminodeoxychorismate synthase (PabB) to produce ADC. The protein is Aminodeoxychorismate synthase component 1 (pabB) of Bacillus subtilis (strain 168).